The chain runs to 183 residues: Adenine phosphoribosyltransferase (183 aa).

It belongs to the purine/pyrimidine phosphoribosyltransferase family. As to quaternary structure, homodimer.

Its subcellular location is the cytoplasm. It catalyses the reaction AMP + diphosphate = 5-phospho-alpha-D-ribose 1-diphosphate + adenine. Its pathway is purine metabolism; AMP biosynthesis via salvage pathway; AMP from adenine: step 1/1. In terms of biological role, catalyzes a salvage reaction resulting in the formation of AMP, that is energically less costly than de novo synthesis. This Escherichia fergusonii (strain ATCC 35469 / DSM 13698 / CCUG 18766 / IAM 14443 / JCM 21226 / LMG 7866 / NBRC 102419 / NCTC 12128 / CDC 0568-73) protein is Adenine phosphoribosyltransferase.